Here is a 601-residue protein sequence, read N- to C-terminus: Elongation factor 4 (601 aa).

One can recognise a tr-type G domain in the interval 2-184 (DLIRNFSIIA…EMIARVPPPT (183 aa)). Residues 14 to 19 (DHGKST) and 131 to 134 (NKID) each bind GTP.

This sequence belongs to the TRAFAC class translation factor GTPase superfamily. Classic translation factor GTPase family. LepA subfamily.

Its subcellular location is the cell inner membrane. It carries out the reaction GTP + H2O = GDP + phosphate + H(+). Functionally, required for accurate and efficient protein synthesis under certain stress conditions. May act as a fidelity factor of the translation reaction, by catalyzing a one-codon backward translocation of tRNAs on improperly translocated ribosomes. Back-translocation proceeds from a post-translocation (POST) complex to a pre-translocation (PRE) complex, thus giving elongation factor G a second chance to translocate the tRNAs correctly. Binds to ribosomes in a GTP-dependent manner. The sequence is that of Elongation factor 4 from Polynucleobacter asymbioticus (strain DSM 18221 / CIP 109841 / QLW-P1DMWA-1) (Polynucleobacter necessarius subsp. asymbioticus).